Reading from the N-terminus, the 313-residue chain is Ribosomal RNA small subunit methyltransferase H (313 aa).

Residues G35–H37, D55, F79, D101, and Q108 each bind S-adenosyl-L-methionine.

This sequence belongs to the methyltransferase superfamily. RsmH family.

The protein resides in the cytoplasm. The catalysed reaction is cytidine(1402) in 16S rRNA + S-adenosyl-L-methionine = N(4)-methylcytidine(1402) in 16S rRNA + S-adenosyl-L-homocysteine + H(+). Specifically methylates the N4 position of cytidine in position 1402 (C1402) of 16S rRNA. This is Ribosomal RNA small subunit methyltransferase H from Klebsiella pneumoniae subsp. pneumoniae (strain ATCC 700721 / MGH 78578).